The sequence spans 512 residues: Cytochrome P450 84A4 (512 aa).

The helical transmembrane segment at 7–24 (LIVLVPLLLFLFPHLLLR) threads the bilayer. Cysteine 447 is a heme binding site.

It belongs to the cytochrome P450 family. Requires heme as cofactor. Expressed in seedlings, roots, stems and inflorescence nodes. Low or no expression in leaves, flowers, seeds and lignifying tissue.

Its subcellular location is the membrane. Cytochrome P450 involved in the production of catechol-substituted substrates needed for the arabidopyrones biosynthesis. Converts p-coumaraldehyde into caffealdehyde. The polypeptide is Cytochrome P450 84A4 (CYP84A4) (Arabidopsis thaliana (Mouse-ear cress)).